A 218-amino-acid polypeptide reads, in one-letter code: uncharacterized protein (218 aa).

Positions 184 to 202 (MDREEKRKEKEEKRKRELA) are enriched in basic and acidic residues. The disordered stretch occupies residues 184-218 (MDREEKRKEKEEKRKRELAARQLKRQEKKKQKTSK). Over residues 205 to 218 (QLKRQEKKKQKTSK) the composition is skewed to basic residues.

This is an uncharacterized protein from Mycoplasma pneumoniae (strain ATCC 29342 / M129 / Subtype 1) (Mycoplasmoides pneumoniae).